We begin with the raw amino-acid sequence, 87 residues long: Cell division protein FtsL (87 aa).

Residues 1–6 are Cytoplasmic-facing; that stretch reads MNKSNF. The helical transmembrane segment at 7–23 threads the bilayer; that stretch reads FLLLAVCVSAFSVVMQQ. Residues 24 to 87 lie on the Periplasmic side of the membrane; sequence NQYRLNFTAL…GNTFMVEHQR (64 aa). Residues 31 to 71 are a coiled coil; sequence TALDKAKKQEIALEQDYAQMRLQQARLANHEAIRAAAEKQN. The tract at residues 68-87 is disordered; the sequence is EKQNLHPPVSGNTFMVEHQR.

This sequence belongs to the FtsL family. Part of a complex composed of FtsB, FtsL and FtsQ.

It is found in the cell inner membrane. Its function is as follows. Essential cell division protein. May link together the upstream cell division proteins, which are predominantly cytoplasmic, with the downstream cell division proteins, which are predominantly periplasmic. In Neisseria gonorrhoeae (strain ATCC 700825 / FA 1090), this protein is Cell division protein FtsL.